Here is a 254-residue protein sequence, read N- to C-terminus: Alcohol dehydrogenase (254 aa).

An NAD(+)-binding site is contributed by 10–33; it reads FVAGLGGIGLDTSREIVKSGPKNL. Position 138 (Ser-138) interacts with substrate. Tyr-151 functions as the Proton acceptor in the catalytic mechanism.

The protein belongs to the short-chain dehydrogenases/reductases (SDR) family. Homodimer.

It catalyses the reaction a primary alcohol + NAD(+) = an aldehyde + NADH + H(+). The catalysed reaction is a secondary alcohol + NAD(+) = a ketone + NADH + H(+). The sequence is that of Alcohol dehydrogenase (Adh) from Drosophila hawaiiensis (Fruit fly).